A 511-amino-acid chain; its full sequence is Chromosomal replication initiator protein DnaA (511 aa).

The tract at residues 1–87 (MSVELWQQCV…IGSKRSSAPR (87 aa)) is domain I, interacts with DnaA modulators. Positions 87-174 (RAAPNAPLAA…QVEGALKHTS (88 aa)) are domain II. Residues 133–160 (VATHDEPSRDSFDPMAGASSQQAPARAE) form a disordered region. Over residues 134–144 (ATHDEPSRDSF) the composition is skewed to basic and acidic residues. Residues 175–391 (YLNRTFTFEN…GALKRVIAHS (217 aa)) are domain III, AAA+ region. 4 residues coordinate ATP: Gly-219, Gly-221, Lys-222, and Thr-223. Positions 392–511 (HFMGRDITIE…YKNLLRTLTT (120 aa)) are domain IV, binds dsDNA.

Belongs to the DnaA family. As to quaternary structure, oligomerizes as a right-handed, spiral filament on DNA at oriC.

It localises to the cytoplasm. Plays an essential role in the initiation and regulation of chromosomal replication. ATP-DnaA binds to the origin of replication (oriC) to initiate formation of the DNA replication initiation complex once per cell cycle. Binds the DnaA box (a 9 base pair repeat at the origin) and separates the double-stranded (ds)DNA. Forms a right-handed helical filament on oriC DNA; dsDNA binds to the exterior of the filament while single-stranded (ss)DNA is stabiized in the filament's interior. The ATP-DnaA-oriC complex binds and stabilizes one strand of the AT-rich DNA unwinding element (DUE), permitting loading of DNA polymerase. After initiation quickly degrades to an ADP-DnaA complex that is not apt for DNA replication. Binds acidic phospholipids. The chain is Chromosomal replication initiator protein DnaA from Pseudomonas syringae pv. tomato (strain ATCC BAA-871 / DC3000).